The sequence spans 271 residues: Putative phosphoenolpyruvate synthase regulatory protein (271 aa).

151 to 158 is an ADP binding site; the sequence is GVSRSGKT.

This sequence belongs to the pyruvate, phosphate/water dikinase regulatory protein family. PSRP subfamily.

The catalysed reaction is [pyruvate, water dikinase] + ADP = [pyruvate, water dikinase]-phosphate + AMP + H(+). It catalyses the reaction [pyruvate, water dikinase]-phosphate + phosphate + H(+) = [pyruvate, water dikinase] + diphosphate. In terms of biological role, bifunctional serine/threonine kinase and phosphorylase involved in the regulation of the phosphoenolpyruvate synthase (PEPS) by catalyzing its phosphorylation/dephosphorylation. This Paraburkholderia phytofirmans (strain DSM 17436 / LMG 22146 / PsJN) (Burkholderia phytofirmans) protein is Putative phosphoenolpyruvate synthase regulatory protein.